A 337-amino-acid polypeptide reads, in one-letter code: Sideroflexin-4 (337 aa).

Residue S2 is modified to N-acetylserine. A run of 3 helical transmembrane segments spans residues 111-131 (AAFL…LKGI), 133-153 (SVIL…SING), and 165-185 (SLLM…PQFV). At K197 the chain carries N6-acetyllysine. The next 2 membrane-spanning stretches (helical) occupy residues 251-271 (ASRI…TYFF) and 293-313 (VLAM…IGQI).

Belongs to the sideroflexin family.

It localises to the mitochondrion inner membrane. In terms of biological role, mitochondrial amino-acid transporter. Does not act as a serine transporter: not able to mediate transport of serine into mitochondria. The sequence is that of Sideroflexin-4 from Homo sapiens (Human).